A 632-amino-acid polypeptide reads, in one-letter code: 1-deoxy-D-xylulose-5-phosphate synthase (632 aa).

Thiamine diphosphate-binding positions include His-77 and 118 to 120; that span reads GHS. Residue Asp-149 coordinates Mg(2+). Thiamine diphosphate-binding positions include 150–151, Asn-178, Tyr-289, and Glu-372; that span reads GA. Residue Asn-178 participates in Mg(2+) binding.

The protein belongs to the transketolase family. DXPS subfamily. Homodimer. Mg(2+) serves as cofactor. It depends on thiamine diphosphate as a cofactor.

The catalysed reaction is D-glyceraldehyde 3-phosphate + pyruvate + H(+) = 1-deoxy-D-xylulose 5-phosphate + CO2. It functions in the pathway metabolic intermediate biosynthesis; 1-deoxy-D-xylulose 5-phosphate biosynthesis; 1-deoxy-D-xylulose 5-phosphate from D-glyceraldehyde 3-phosphate and pyruvate: step 1/1. Catalyzes the acyloin condensation reaction between C atoms 2 and 3 of pyruvate and glyceraldehyde 3-phosphate to yield 1-deoxy-D-xylulose-5-phosphate (DXP). The sequence is that of 1-deoxy-D-xylulose-5-phosphate synthase from Listeria innocua serovar 6a (strain ATCC BAA-680 / CLIP 11262).